The chain runs to 1668 residues: Kinesin-like protein KIF21B (1668 aa).

Residues Cys8 to Ile371 enclose the Kinesin motor domain. Position 87–94 (Gly87–Thr94) interacts with ATP. Residues Lys372 to Leu465 are a coiled coil. Residues Met401–His1100 form an interaction with TRIM3 region. Disordered regions lie at residues Lys553–Lys629 and Arg837–Ser866. The span at Asn579–Glu628 shows a compositional bias: acidic residues. Ser580 carries the post-translational modification Phosphoserine. Thr583 carries the post-translational modification Phosphothreonine. A compositionally biased stretch (low complexity) spans Ser847–Ser866. Positions Ile924–Thr1019 form a coiled coil. Phosphoserine is present on residues Ser1150, Ser1168, and Ser1217. Polar residues predominate over residues Leu1199–Leu1219. The tract at residues Leu1199–Asn1253 is disordered. At Thr1239 the chain carries Phosphothreonine. Phosphoserine is present on Ser1243. 7 WD repeats span residues Gly1308–Ala1345, Gly1348–Arg1386, Gln1412–Lys1450, Gly1453–Ile1495, Pro1504–Gln1541, Ala1545–Glu1584, and Gly1587–Leu1624.

It belongs to the TRAFAC class myosin-kinesin ATPase superfamily. Kinesin family. In terms of assembly, interacts with TRIM3; the interaction positively affects motility of KIF21B. Interacts with GABARAP and GABA(A) receptor subunits: GABRG2, GABRA1 and GABRA2. May interact with GABA(A) receptor subunits: GABRB2 and GABRB3. In terms of tissue distribution, expressed in brain (at protein level). Expressed in spleen and at lower levels in testes.

It is found in the cytoplasm. Its subcellular location is the cytoskeleton. The protein resides in the cell projection. The protein localises to the dendrite. It localises to the growth cone. It is found in the axon. Its subcellular location is the cytoplasmic vesicle. In terms of biological role, plus-end directed microtubule-dependent motor protein which displays processive activity. Is involved in regulation of microtubule dynamics, synapse function and neuronal morphology, including dendritic tree branching and spine formation. Plays a role in lerning and memory. Involved in delivery of gamma-aminobutyric acid (GABA(A)) receptor to cell surface. This is Kinesin-like protein KIF21B (Kif21b) from Mus musculus (Mouse).